The sequence spans 466 residues: MKSTVEQLSPTRVRINVEVPFAELEPDFQRAYKELAKQVRLPGFRPGKAPAKLLEARIGREAMLDQIVNDALPSRYGQAVAESDVQPLGRPNIEVTKKEYGQDLQFTAEVDIRPKISPPDLSALTVSVDPIEIGEDDVDAELQSLRTRFGTLTAVDRPVAVGDVVSIDLSATVDGEDIPNAAAEGLSHEVGSGRLIAGLDDAVVGLSADESRVFTAKLAAGEHAGQEAQVTVTVRSVKERELPEPDDEFAQLASEFDSIDELRASLSDQVRQAKRAQQAEQIRNATIDALLEQVDVPLPESYVQAQFDSVLHSALSGLNHDEARFNELLVEQGSSRAAFDAEARTASEKDVKRQLLLDALADELQVQVGQDDLTERLVTTSRQYGIEPQQLFGYLQERNQLPTMFADVRRELAIRAAVEAATVTDSDGNTIDTSEFFGKRVSAGEAEEAEPADEGAARAASDEATT.

Residues 162-243 (GDVVSIDLSA…VRSVKERELP (82 aa)) form the PPIase FKBP-type domain. The disordered stretch occupies residues 428–466 (GNTIDTSEFFGKRVSAGEAEEAEPADEGAARAASDEATT). Low complexity predominate over residues 457 to 466 (ARAASDEATT).

It belongs to the FKBP-type PPIase family. Tig subfamily.

It is found in the cytoplasm. The enzyme catalyses [protein]-peptidylproline (omega=180) = [protein]-peptidylproline (omega=0). Its function is as follows. Involved in protein export. Acts as a chaperone by maintaining the newly synthesized protein in an open conformation. Functions as a peptidyl-prolyl cis-trans isomerase. This Mycobacterium tuberculosis (strain ATCC 25177 / H37Ra) protein is Trigger factor.